Here is a 513-residue protein sequence, read N- to C-terminus: 2,3-bisphosphoglycerate-independent phosphoglycerate mutase (513 aa).

Mn(2+)-binding residues include D13 and S63. S63 functions as the Phosphoserine intermediate in the catalytic mechanism. Substrate is bound by residues H124, 154 to 155, R186, R192, 262 to 265, and K335; these read RD and RADR. Residues D403, H407, D444, H445, and H463 each contribute to the Mn(2+) site.

The protein belongs to the BPG-independent phosphoglycerate mutase family. In terms of assembly, monomer. Mn(2+) serves as cofactor.

It carries out the reaction (2R)-2-phosphoglycerate = (2R)-3-phosphoglycerate. The protein operates within carbohydrate degradation; glycolysis; pyruvate from D-glyceraldehyde 3-phosphate: step 3/5. Functionally, catalyzes the interconversion of 2-phosphoglycerate and 3-phosphoglycerate. This chain is 2,3-bisphosphoglycerate-independent phosphoglycerate mutase, found in Myxococcus xanthus (strain DK1622).